Reading from the N-terminus, the 339-residue chain is Terpene synthase 7 (339 aa).

Residues 79-84 (DDFLES) carry the DDxx(x)D/E motif motif. An NDxxSxxxD/E motif motif is present at residues 219–227 (NDCASYAKE).

This sequence belongs to the terpene synthase family.

The enzyme catalyses (2E,6E)-farnesyl diphosphate = (-)-beta-barbatene + diphosphate. In terms of biological role, terpene synthase that converts its substrate farnesyl diphosphate (FPP) into the sesquiterpene beta-barbatene. This Dictyostelium discoideum (Social amoeba) protein is Terpene synthase 7.